A 735-amino-acid chain; its full sequence is Protein STRUBBELIG-RECEPTOR FAMILY 2 (735 aa).

The first 23 residues, 1–23 (MKTKQQLRFLATILLTTILFVLA), serve as a signal peptide directing secretion. Topologically, residues 24–297 (KTDTDPLEVL…KKKKKGIGAG (274 aa)) are extracellular. 8 LRR repeats span residues 78-94 (LRELKLLGSLGNQLQHL), 96-119 (NLKILDVSFNNLEGEIPFGLPPNA), 120-140 (THINMAYNNLTQSIPFSLPLM), 142-163 (SLQSLNLSHNSLSGPLGNVFSG), 165-187 (QIKEMDLSFNNLTGDLPSSFGTL), 189-211 (NLTSLYLQNNRLTGSVIYLADLP), 212-232 (LADLNIEDNQFSGIIPSHFQS), and 233-253 (IPHLWIWGNKFHVEPNYKPWK). Residues asparagine 118, asparagine 128, asparagine 147, asparagine 175, and asparagine 189 are each glycosylated (N-linked (GlcNAc...) asparagine). An N-linked (GlcNAc...) asparagine glycan is attached at asparagine 264. Residues 298 to 318 (STFLLVGGLALLGTFFALFAV) form a helical membrane-spanning segment. Residues 319-735 (RMNHRRAQNL…SSPTFSYLSS (417 aa)) lie on the Cytoplasmic side of the membrane. Positions 358–378 (PQIKRFQPPPAPQLRHLPSPP) are disordered. The Protein kinase domain maps to 415–695 (FSEENLLGEG…EIVEALTALI (281 aa)).

The protein belongs to the protein kinase superfamily. Ser/Thr protein kinase family. In terms of tissue distribution, expressed in seedlings, roots, stems, leaves, flowers and siliques.

It localises to the membrane. This is Protein STRUBBELIG-RECEPTOR FAMILY 2 (SRF2) from Arabidopsis thaliana (Mouse-ear cress).